We begin with the raw amino-acid sequence, 409 residues long: Bone morphogenetic protein 4 (409 aa).

The first 24 residues, 1-24 (MIPGNRMLMVVLLCQVLLGGASHA), serve as a signal peptide directing secretion. Positions 25-293 (SLIPETGKKK…ALTRRRRAKR (269 aa)) are excised as a propeptide. Position 91 is a phosphoserine (S91). Residues N144 and N209 are each glycosylated (N-linked (GlcNAc...) asparagine). The tract at residues 284 to 308 (ALTRRRRAKRSPKHHPQRARKKNKN) is disordered. 3 disulfide bridges follow: C309-C374, C338-C406, and C342-C408. N351 and N366 each carry an N-linked (GlcNAc...) asparagine glycan.

The protein belongs to the TGF-beta family. In terms of assembly, homodimer; disulfide-linked. Interacts with GREM2. Part of a complex consisting of TWSG1 and CHRD. Interacts with the serine proteases, HTRA1 and HTRA3; the interaction with either inhibits BMP4-mediated signaling. The HTRA protease activity is required for this inhibition. Interacts with SOSTDC1. Interacts with FBN1 (via N-terminal domain) and FBN2. Interacts with type I receptor BMPR1A. Interacts with type II receptor BMPR2. Interacts with FSTL1; this interaction inhibits the activation of the BMP4/Smad1/5/8 signaling pathway. Interacts with SCUBE3. Interacts with TGFBR3.

It localises to the secreted. The protein localises to the extracellular space. Its subcellular location is the extracellular matrix. Its function is as follows. Growth factor of the TGF-beta superfamily that plays essential roles in many developmental processes, including neurogenesis, vascular development, angiogenesis and osteogenesis. Acts in concert with PTHLH/PTHRP to stimulate ductal outgrowth during embryonic mammary development and to inhibit hair follicle induction. Initiates the canonical BMP signaling cascade by associating with type I receptor BMPR1A and type II receptor BMPR2. Once all three components are bound together in a complex at the cell surface, BMPR2 phosphorylates and activates BMPR1A. In turn, BMPR1A propagates signal by phosphorylating SMAD1/5/8 that travel to the nucleus and act as activators and repressors of transcription of target genes. Positively regulates the expression of odontogenic development regulator MSX1 via inducing the IPO7-mediated import of SMAD1 to the nucleus. Required for MSX1-mediated mesenchymal molar tooth bud development beyond the bud stage, via promoting Wnt signaling. Acts as a positive regulator of odontoblast differentiation during mesenchymal tooth germ formation, expression is repressed during the bell stage by MSX1-mediated inhibition of CTNNB1 signaling. Able to induce its own expression in dental mesenchymal cells and also in the neighboring dental epithelial cells via an MSX1-mediated pathway. Can also signal through non-canonical BMP pathways such as ERK/MAP kinase, PI3K/Akt, or SRC cascades. For example, induces SRC phosphorylation which, in turn, activates VEGFR2, leading to an angiogenic response. The polypeptide is Bone morphogenetic protein 4 (Bos taurus (Bovine)).